The following is a 68-amino-acid chain: Small ribosomal subunit protein bS21 (68 aa).

The protein belongs to the bacterial ribosomal protein bS21 family.

This is Small ribosomal subunit protein bS21 from Cereibacter sphaeroides (strain ATCC 17029 / ATH 2.4.9) (Rhodobacter sphaeroides).